We begin with the raw amino-acid sequence, 437 residues long: Nuclear hormone receptor family member nhr-28 (437 aa).

Positions 5 to 80 form a DNA-binding region, nuclear receptor; the sequence is KSPCSVCGEA…VGMRKSAVQR (76 aa). 2 NR C4-type zinc fingers span residues 8-28 and 44-68; these read CSVC…CRAC and CRAM…FTKC. Residues 115–376 enclose the NR LBD domain; sequence YEETGMPTLS…ETFYELVSGR (262 aa).

Belongs to the nuclear hormone receptor family. In terms of tissue distribution, expressed in the pharynx, intestine and hypodermis.

The protein localises to the nucleus. Orphan nuclear receptor. The sequence is that of Nuclear hormone receptor family member nhr-28 (nhr-28) from Caenorhabditis elegans.